We begin with the raw amino-acid sequence, 270 residues long: Meiotic recombination 1 protein (270 aa).

The KH domain maps to 191–225; the sequence is EIKLNKTQITFLIGAKGTRIESLREKSGASIKIIP.

In terms of biological role, required for chromosome pairing and genetic recombination. MER1 may function to bring the axial elements of the synaptonemal complex corresponding to homologous chromosomes together by initiating recombination. MER1 might be responsible for regulating the MER2 gene and/or gene product. The sequence is that of Meiotic recombination 1 protein (MER1) from Saccharomyces cerevisiae (strain ATCC 204508 / S288c) (Baker's yeast).